The chain runs to 223 residues: Phosphoribosylformylglycinamidine synthase subunit PurQ (223 aa).

One can recognise a Glutamine amidotransferase type-1 domain in the interval 4–223; the sequence is FAVVVFPGTN…FKGMVEWVRS (220 aa). C85 serves as the catalytic Nucleophile. Active-site residues include H196 and E198.

In terms of assembly, part of the FGAM synthase complex composed of 1 PurL, 1 PurQ and 2 PurS subunits.

It is found in the cytoplasm. The catalysed reaction is N(2)-formyl-N(1)-(5-phospho-beta-D-ribosyl)glycinamide + L-glutamine + ATP + H2O = 2-formamido-N(1)-(5-O-phospho-beta-D-ribosyl)acetamidine + L-glutamate + ADP + phosphate + H(+). It catalyses the reaction L-glutamine + H2O = L-glutamate + NH4(+). Its pathway is purine metabolism; IMP biosynthesis via de novo pathway; 5-amino-1-(5-phospho-D-ribosyl)imidazole from N(2)-formyl-N(1)-(5-phospho-D-ribosyl)glycinamide: step 1/2. Its function is as follows. Part of the phosphoribosylformylglycinamidine synthase complex involved in the purines biosynthetic pathway. Catalyzes the ATP-dependent conversion of formylglycinamide ribonucleotide (FGAR) and glutamine to yield formylglycinamidine ribonucleotide (FGAM) and glutamate. The FGAM synthase complex is composed of three subunits. PurQ produces an ammonia molecule by converting glutamine to glutamate. PurL transfers the ammonia molecule to FGAR to form FGAM in an ATP-dependent manner. PurS interacts with PurQ and PurL and is thought to assist in the transfer of the ammonia molecule from PurQ to PurL. This is Phosphoribosylformylglycinamidine synthase subunit PurQ from Pyrococcus furiosus (strain ATCC 43587 / DSM 3638 / JCM 8422 / Vc1).